The sequence spans 809 residues: Phenylalanine--tRNA ligase beta subunit (809 aa).

The 114-residue stretch at 39–152 (KDKWPNVYVG…ADALVGMLAS (114 aa)) folds into the tRNA-binding domain. The B5 domain maps to 404–492 (KERNGIVLSL…RIAGYHTIPC (89 aa)). Positions 470, 476, 479, and 480 each coordinate Mg(2+). Positions 717-808 (NRFPAVERDL…LNTETGAVLR (92 aa)) constitute an FDX-ACB domain.

The protein belongs to the phenylalanyl-tRNA synthetase beta subunit family. Type 1 subfamily. As to quaternary structure, tetramer of two alpha and two beta subunits. It depends on Mg(2+) as a cofactor.

The protein localises to the cytoplasm. It carries out the reaction tRNA(Phe) + L-phenylalanine + ATP = L-phenylalanyl-tRNA(Phe) + AMP + diphosphate + H(+). The chain is Phenylalanine--tRNA ligase beta subunit from Dehalococcoides mccartyi (strain CBDB1).